The sequence spans 319 residues: Putative replication factor C small subunit R395 (319 aa).

45-52 (GSPGVGKT) is a binding site for ATP.

This sequence belongs to the activator 1 small subunits family. RfcS subfamily.

Its function is as follows. Part of the RFC clamp loader complex which loads the PCNA sliding clamp onto DNA. This is Putative replication factor C small subunit R395 from Acanthamoeba polyphaga mimivirus (APMV).